Here is a 209-residue protein sequence, read N- to C-terminus: NADH-quinone oxidoreductase subunit C (209 aa).

The protein belongs to the complex I 30 kDa subunit family. In terms of assembly, NDH-1 is composed of 14 different subunits. Subunits NuoB, C, D, E, F, and G constitute the peripheral sector of the complex.

Its subcellular location is the cell inner membrane. The catalysed reaction is a quinone + NADH + 5 H(+)(in) = a quinol + NAD(+) + 4 H(+)(out). Functionally, NDH-1 shuttles electrons from NADH, via FMN and iron-sulfur (Fe-S) centers, to quinones in the respiratory chain. The immediate electron acceptor for the enzyme in this species is believed to be ubiquinone. Couples the redox reaction to proton translocation (for every two electrons transferred, four hydrogen ions are translocated across the cytoplasmic membrane), and thus conserves the redox energy in a proton gradient. In Bordetella petrii (strain ATCC BAA-461 / DSM 12804 / CCUG 43448), this protein is NADH-quinone oxidoreductase subunit C.